A 65-amino-acid chain; its full sequence is Defensin-B3 (65 aa).

The signal sequence occupies residues 1–21 (MRLLLVFFFLSLLDQAPPARS). Cystine bridges form between Cys-29/Cys-58, Cys-36/Cys-50, and Cys-40/Cys-59. Positions 62–65 (ESPR) are excised as a propeptide.

The protein belongs to the beta-defensin family. In terms of tissue distribution, lowly expressed in spleen, and expressed at lower levels in kidney, lung and testis.

It is found in the secreted. Has antimicrobial activity. This chain is Defensin-B3, found in Ornithorhynchus anatinus (Duckbill platypus).